We begin with the raw amino-acid sequence, 120 residues long: UPF0102 protein Pfl01_4685 (120 aa).

It belongs to the UPF0102 family.

This chain is UPF0102 protein Pfl01_4685, found in Pseudomonas fluorescens (strain Pf0-1).